We begin with the raw amino-acid sequence, 492 residues long: MFSSAHSGLLEKLFHYIDLHQDEFVQTLKEWVAIESDSVQPVPRLRQKLFQMMALAADKLRNLGAGVESIDLGSQQMPDGQSLPIPPILLAELGSDPEKPTVCFYGHLDVQPAQKDDGWLTDPYTLTEVDGKLYGRGATDNKGPVLAWINAVSTFRALQQDLPVNIKFILEGMEEAGSIALEELVMREKDHFFSSVDYIVISDNLWLSQRKPALTYGTRGNCYFTVEVKCRDQDFHSGTFGGILNEPMADLVALLGSLVDSSGHILIPGIYDQMAPITEGEKTMYKNIDMDLEEYQNINQVEKFLFDTKEELLMHLWRYPSLSIHGIEGAFDEPGTKTVIPGRVLGKFSIRLVPTMSPSVVEKQVTQHLEAVFSKRNSFNKMAVSMVLGLHPWTANVNDTQYLAAQRTIKTVFGVNPDMIRDGSTIPIAKIFQAITQKSVMMLPLGAVDDGEHSQNEKINRWNYIQGSKLFAAFFLELSKQHSGHQMPSSVY.

H107 contributes to the Zn(2+) binding site. Residue D109 is part of the active site. D140 contributes to the Zn(2+) binding site. The active-site Proton acceptor is E174. E175 contributes to the Zn(2+) binding site. A Phosphoserine modification is found at S194. Zn(2+)-binding residues include D203 and H453.

The protein belongs to the peptidase M20A family. Homodimer. It depends on Zn(2+) as a cofactor. As to expression, detected exclusively in kidney.

Its subcellular location is the secreted. It carries out the reaction Preferential hydrolysis of the beta-Ala-|-His dipeptide (carnosine), and also anserine, Xaa-|-His dipeptides and other dipeptides including homocarnosine.. The enzyme catalyses carnosine + H2O = beta-alanine + L-histidine. The catalysed reaction is anserine + H2O = N(pros)-methyl-L-histidine + beta-alanine. It catalyses the reaction L-alanyl-L-histidine + H2O = L-histidine + L-alanine. It carries out the reaction glycyl-L-histidine + H2O = L-histidine + glycine. The enzyme catalyses L-homocarnosine + H2O = 4-aminobutanoate + L-histidine. Functionally, catalyzes the peptide bond hydrolysis in Xaa-His dipeptides, displaying the highest activity toward carnosine (beta-alanyl-L-histidine) and anserine (beta-alanyl-3-methyl-histidine). This chain is Beta-Ala-His dipeptidase (Cndp1), found in Mus musculus (Mouse).